Here is a 456-residue protein sequence, read N- to C-terminus: Signal transduction histidine-protein kinase ArlS (456 aa).

The next 2 helical transmembrane spans lie at 13-33 (LITTLITFTTILLFCLIIIFF) and 157-177 (IVALAFGLIATIITAGVSYIF). The HAMP domain maps to 179 to 232 (SQITKPIVTMSNKMNQIRRDGFQNKLELTTNYEETDNLIDTFNEMMYQIEESFN). The region spanning 240-456 (DASHELRTPL…TFKISFPVLN (217 aa)) is the Histidine kinase domain. A Phosphohistidine; by autocatalysis modification is found at H243.

Autophosphorylated.

Its subcellular location is the cell membrane. The enzyme catalyses ATP + protein L-histidine = ADP + protein N-phospho-L-histidine.. In terms of biological role, member of the two-component regulatory system ArlS/ArlR. ArlS probably functions as a sensor protein kinase which is autophosphorylated at a histidine residue and transfers its phosphate group to ArlR. The protein is Signal transduction histidine-protein kinase ArlS (arlS) of Staphylococcus epidermidis (strain ATCC 12228 / FDA PCI 1200).